The primary structure comprises 506 residues: F-box protein At4g02760 (506 aa).

The region spanning 115 to 161 is the F-box domain; that stretch reads TSWPLLPELTIKVFSMLDTKSLMQASACCTMFNKCAMDRVCYSHIDL. Positions 452–506 are disordered; it reads TFVAEFRSPSPSESDVRSPSPSSSSDSSSSSDSSSSSSSGESSDESGTEEEEDED. Over residues 459–492 the composition is skewed to low complexity; it reads SPSPSESDVRSPSPSSSSDSSSSSDSSSSSSSGE. Positions 493 to 506 are enriched in acidic residues; it reads SSDESGTEEEEDED.

The sequence is that of F-box protein At4g02760 from Arabidopsis thaliana (Mouse-ear cress).